The following is a 464-amino-acid chain: MNLRTIRAELQQFLQLAIPLAAAQVAQAAVGFVDTVMMGRLGPEPLAAGGLASALFQFILATASGVVMAVSPLVAEAQGAGKDYKIAAIARQGLWLSVLLGLPVMLIISQLARLMPVLGQSATTIALARDYWMAVLWGIIPGLGFAMLRGYVAALEQARIILPLVLFGTLVNGLGNYLLGYGQLGFPRLELTGLGLSSALGLWVMFLGLLAYTAWQPKLRRYPFWQDWRRLQPSICRQILQLGWAIAVTVAVEFGLFTIITILMGAIGVEALAAHQTVSQTIILIFMVPLGCSFAVTVRVGWWLGRQDGLGARRAGLVGVGAIALWMLLLAIPLALFPRAIVGIYVDLNNPVNAGLLNLALPMLRVASLALVLDGVQRVAMGALHGLQDTRIPLLLSLLAFWMVGVGSSAMLGFQLGWGSTGLWIGQSLGVAIAGGLFLQRFLKLTQNRTFKQRLQPQPLATHP.

Transmembrane regions (helical) follow at residues 13 to 32 (FLQL…AVGF), 52 to 74 (ASAL…SPLV), 94 to 116 (LWLS…RLMP), 131 to 153 (YWMA…GYVA), 160 to 182 (IILP…LGYG), 192 to 214 (TGLG…AYTA), 244 to 266 (WAIA…LMGA), 281 to 303 (TIIL…VGWW), 315 to 337 (AGLV…LALF), 352 to 373 (VNAG…ALVL), 394 to 416 (LLLS…GFQL), and 421 to 443 (TGLW…QRFL).

It belongs to the multi antimicrobial extrusion (MATE) (TC 2.A.66.1) family.

It localises to the cell inner membrane. Multidrug efflux pump. This chain is Probable multidrug resistance protein NorM (norM), found in Synechococcus sp. (strain ATCC 27144 / PCC 6301 / SAUG 1402/1) (Anacystis nidulans).